A 174-amino-acid chain; its full sequence is Large ribosomal subunit protein uL10 (174 aa).

The protein belongs to the universal ribosomal protein uL10 family. In terms of assembly, part of the ribosomal stalk of the 50S ribosomal subunit. The N-terminus interacts with L11 and the large rRNA to form the base of the stalk. The C-terminus forms an elongated spine to which L12 dimers bind in a sequential fashion forming a multimeric L10(L12)X complex.

In terms of biological role, forms part of the ribosomal stalk, playing a central role in the interaction of the ribosome with GTP-bound translation factors. The chain is Large ribosomal subunit protein uL10 from Bordetella petrii (strain ATCC BAA-461 / DSM 12804 / CCUG 43448).